The chain runs to 295 residues: Ribosomal protein L11 methyltransferase (295 aa).

Positions 145, 166, 188, and 230 each coordinate S-adenosyl-L-methionine.

The protein belongs to the methyltransferase superfamily. PrmA family.

The protein resides in the cytoplasm. The enzyme catalyses L-lysyl-[protein] + 3 S-adenosyl-L-methionine = N(6),N(6),N(6)-trimethyl-L-lysyl-[protein] + 3 S-adenosyl-L-homocysteine + 3 H(+). In terms of biological role, methylates ribosomal protein L11. This Shewanella amazonensis (strain ATCC BAA-1098 / SB2B) protein is Ribosomal protein L11 methyltransferase.